We begin with the raw amino-acid sequence, 269 residues long: Spermatogenesis-associated serine-rich protein 1 (269 aa).

A compositionally biased stretch (basic and acidic residues) spans 1 to 14; the sequence is MESSKDTQHGDALE. Residues 1-92 form a disordered region; it reads MESSKDTQHG…SKVSLPEIPK (92 aa). Over residues 18–38 the composition is skewed to polar residues; the sequence is CLANRTSSRQNKRTSLSSSDG. Threonine 54 carries the phosphothreonine modification. Residues 67–86 show a composition bias toward low complexity; sequence SSSSSSSSSSAQSNRSSKVS. A phosphoserine mark is found at serine 72, serine 75, and serine 82.

The sequence is that of Spermatogenesis-associated serine-rich protein 1 (Spats1) from Mus musculus (Mouse).